Consider the following 201-residue polypeptide: Musculin (201 aa).

2 disordered regions span residues 1 to 108 (MSTG…NAAN) and 182 to 201 (RPDS…GTSA). Over residues 46-56 (SAEEEDGEEEP) the composition is skewed to acidic residues. Residues 66-71 (KRKRLR) carry the Nuclear localization signal motif. Residues 74 to 86 (DAGGAGGRAGGAG) are compositionally biased toward gly residues. Positions 102-154 (SQRNAANARERARMRVLSKAFSRLKTSLPWVPPDTKLSKLDTLRLASSYIAHL) constitute a bHLH domain.

In terms of assembly, efficient DNA binding requires dimerization with another bHLH protein. Binds DNA as a homodimer or a heterodimer. Forms a heterodimer with TCF3.

The protein resides in the nucleus. Functionally, transcription repressor that blocks myogenesis and activation of E-box dependent muscle genes. The protein is Musculin (Msc) of Mus musculus (Mouse).